The following is a 348-amino-acid chain: Photosystem II protein D1 (348 aa).

Helical transmembrane passes span Tyr-33–Val-50, His-122–Phe-137, and Trp-146–Ala-160. Chlorophyll a is bound at residue His-122. Position 130 (Tyr-130) interacts with pheophytin a. Asp-174 and Glu-193 together coordinate [CaMn4O5] cluster. A helical membrane pass occupies residues Phe-201–Leu-222. Residue His-202 participates in chlorophyll a binding. A quinone is bound by residues His-219 and Ser-268–Phe-269. His-219 serves as a coordination point for Fe cation. His-276 is a Fe cation binding site. The chain crosses the membrane as a helical span at residues Phe-278–Leu-292. 4 residues coordinate [CaMn4O5] cluster: His-336, Glu-337, Asp-346, and Ala-348.

It belongs to the reaction center PufL/M/PsbA/D family. PSII is composed of 1 copy each of membrane proteins PsbA, PsbB, PsbC, PsbD, PsbE, PsbF, PsbH, PsbI, PsbJ, PsbK, PsbL, PsbM, PsbT, PsbX, PsbY, PsbZ, Psb30/Ycf12, at least 3 peripheral proteins of the oxygen-evolving complex and a large number of cofactors. It forms dimeric complexes. The cofactor is The D1/D2 heterodimer binds P680, chlorophylls that are the primary electron donor of PSII, and subsequent electron acceptors. It shares a non-heme iron and each subunit binds pheophytin, quinone, additional chlorophylls, carotenoids and lipids. D1 provides most of the ligands for the Mn4-Ca-O5 cluster of the oxygen-evolving complex (OEC). There is also a Cl(-1) ion associated with D1 and D2, which is required for oxygen evolution. The PSII complex binds additional chlorophylls, carotenoids and specific lipids.. Tyr-165 forms a radical intermediate that is referred to as redox-active TyrZ, YZ or Y-Z.

The protein resides in the plastid. The protein localises to the chloroplast thylakoid membrane. It carries out the reaction 2 a plastoquinone + 4 hnu + 2 H2O = 2 a plastoquinol + O2. In terms of biological role, photosystem II (PSII) is a light-driven water:plastoquinone oxidoreductase that uses light energy to abstract electrons from H(2)O, generating O(2) and a proton gradient subsequently used for ATP formation. It consists of a core antenna complex that captures photons, and an electron transfer chain that converts photonic excitation into a charge separation. The D1/D2 (PsbA/PsbD) reaction center heterodimer binds P680, the primary electron donor of PSII as well as several subsequent electron acceptors. This chain is Photosystem II protein D1, found in Heterocapsa pygmaea (Dinoflagellate).